A 491-amino-acid polypeptide reads, in one-letter code: Acetyl-coenzyme A carboxylase carboxyl transferase subunit beta, chloroplastic (491 aa).

Positions 26 to 49 are disordered; the sequence is ARPRPIGNTNGSQDPSINDRDKNG. Residues 32 to 41 are compositionally biased toward polar residues; the sequence is GNTNGSQDPS. In terms of domain architecture, CoA carboxyltransferase N-terminal spans 222 to 491; sequence LWVQCDNCYG…PLNHNSQVKR (270 aa). 4 residues coordinate Zn(2+): Cys226, Cys229, Cys245, and Cys248. The segment at 226–248 adopts a C4-type zinc-finger fold; it reads CDNCYGLNYKKIFSSKMNICEQC.

Belongs to the AccD/PCCB family. As to quaternary structure, acetyl-CoA carboxylase is a heterohexamer composed of biotin carboxyl carrier protein, biotin carboxylase and 2 subunits each of ACCase subunit alpha and ACCase plastid-coded subunit beta (accD). Requires Zn(2+) as cofactor.

The protein resides in the plastid. It is found in the chloroplast stroma. The enzyme catalyses N(6)-carboxybiotinyl-L-lysyl-[protein] + acetyl-CoA = N(6)-biotinyl-L-lysyl-[protein] + malonyl-CoA. It functions in the pathway lipid metabolism; malonyl-CoA biosynthesis; malonyl-CoA from acetyl-CoA: step 1/1. Functionally, component of the acetyl coenzyme A carboxylase (ACC) complex. Biotin carboxylase (BC) catalyzes the carboxylation of biotin on its carrier protein (BCCP) and then the CO(2) group is transferred by the transcarboxylase to acetyl-CoA to form malonyl-CoA. This Ceratophyllum demersum (Rigid hornwort) protein is Acetyl-coenzyme A carboxylase carboxyl transferase subunit beta, chloroplastic.